A 531-amino-acid chain; its full sequence is High affinity cysteine transporter (531 aa).

Topologically, residues M1–K54 are cytoplasmic. The chain crosses the membrane as a helical span at residues L55–A75. At T76–N97 the chain is on the lumenal side. The chain crosses the membrane as a helical span at residues T98 to A118. Topologically, residues Q119–K120 are cytoplasmic. The chain crosses the membrane as a helical span at residues L121–S141. Topologically, residues C142 to R154 are lumenal. N-linked (GlcNAc...) asparagine glycosylation is present at N146. Residues F155 to F175 traverse the membrane as a helical segment. The Cytoplasmic portion of the chain corresponds to F176 to P186. Residues F187–L207 form a helical membrane-spanning segment. The Lumenal segment spans residues H208–K218. A helical membrane pass occupies residues I219–F239. Residues P240–D285 lie on the Cytoplasmic side of the membrane. Residues Y286 to Y306 traverse the membrane as a helical segment. Topologically, residues Q307–T324 are lumenal. Residues L325–L345 traverse the membrane as a helical segment. The Cytoplasmic segment spans residues A346 to S352. The chain crosses the membrane as a helical span at residues A353–L373. Topologically, residues P374–K378 are lumenal. A helical membrane pass occupies residues I379–A399. Over L400 to K413 the chain is Cytoplasmic. Residues L414–R436 form a helical membrane-spanning segment. Residues E437–W447 lie on the Lumenal side of the membrane. The helical transmembrane segment at I448–I468 threads the bilayer. Residues L469–N498 are a coiled coil. At L469–L531 the chain is on the cytoplasmic side. Residues S500 and S501 each carry the phosphoserine modification.

Belongs to the major facilitator superfamily. Allantoate permease family.

It is found in the cell membrane. The protein resides in the endoplasmic reticulum membrane. Functionally, high affinity cysteine-specific transporter. Major contributor to cysteine transport when cysteine, at low concentrations, is provided as the sole sulfur source. This is High affinity cysteine transporter (YCT1) from Saccharomyces cerevisiae (strain ATCC 204508 / S288c) (Baker's yeast).